The sequence spans 244 residues: Aspartate/glutamate leucyltransferase (244 aa).

This sequence belongs to the R-transferase family. Bpt subfamily.

The protein resides in the cytoplasm. The enzyme catalyses N-terminal L-glutamyl-[protein] + L-leucyl-tRNA(Leu) = N-terminal L-leucyl-L-glutamyl-[protein] + tRNA(Leu) + H(+). It carries out the reaction N-terminal L-aspartyl-[protein] + L-leucyl-tRNA(Leu) = N-terminal L-leucyl-L-aspartyl-[protein] + tRNA(Leu) + H(+). Functionally, functions in the N-end rule pathway of protein degradation where it conjugates Leu from its aminoacyl-tRNA to the N-termini of proteins containing an N-terminal aspartate or glutamate. The protein is Aspartate/glutamate leucyltransferase of Bordetella parapertussis (strain 12822 / ATCC BAA-587 / NCTC 13253).